Reading from the N-terminus, the 73-residue chain is Kappa-scoloptoxin SsmTx-I (73 aa).

Positions 1–25 (MMMMFSVVSVFLMLLLLKFHDLSMG) are cleaved as a signal peptide. Residues 26-37 (EEISLLKKVVRR) constitute a propeptide that is removed on maturation. Cystine bridges form between Cys-45/Cys-56 and Cys-50/Cys-63.

Belongs to the scoloptoxin-04 family. In terms of tissue distribution, expressed by the venom gland.

Its subcellular location is the secreted. Functionally, exhibits highly specific blockage of Kv2.1/KCNB1 (IC(50)=41.7 nM) voltage-gated potassium channels. This blockage is not associated with a significant change in steady-state activation, suggesting that this toxin acts as a channel blocker rather than a gating-modifier. Shows potential analgesic activities in formalin-induced paw licking, thermal pain, and acetic acid-induced abdominal writhing mice models. This Scolopendra mutilans (Chinese red-headed centipede) protein is Kappa-scoloptoxin SsmTx-I.